A 43-amino-acid chain; its full sequence is METATIIVIFVSSLLLGITAYSIYTAFGPAAKNLRDPFEEHED.

The helical transmembrane segment at 4 to 24 (ATIIVIFVSSLLLGITAYSIY) threads the bilayer.

Belongs to the PsbN family.

It is found in the plastid. The protein localises to the chloroplast thylakoid membrane. Its function is as follows. May play a role in photosystem I and II biogenesis. In Trieres chinensis (Marine centric diatom), this protein is Protein PsbN.